Here is an 822-residue protein sequence, read N- to C-terminus: Nuclear factor of activated T-cells, cytoplasmic 1 (822 aa).

The tract at residues 110 to 115 (PRIEIT) is calcineurin-binding. Residues 118–210 (LGLHHNNGQF…CVSPKTTDPE (93 aa)) form a transactivation domain A (TAD-A) region. The span at 192-206 (PQTSPWQSPCVSPKT) shows a compositional bias: polar residues. The disordered stretch occupies residues 192 to 289 (PQTSPWQSPC…HSSPRVSVTD (98 aa)). 2 consecutive repeat copies span residues 195 to 211 (SPWQ…DPEE) and 225 to 241 (SPRH…VTEE). A 3 X SP repeats region spans residues 195 to 290 (SPWQSPCVSP…SSPRVSVTDD (96 aa)). 2 positions are modified to phosphoserine: serine 225 and serine 229. Residues 225–242 (SPRHSPSTSPRTSVTEES) show a composition bias toward low complexity. Serine 237 carries the post-translational modification Phosphoserine; by PKA. The Nuclear localization signal motif lies at 257–259 (KRK). Repeat 3 spans residues 274–290 (SPTPSPHSSPRVSVTDD). Serine 286 carries the post-translational modification Phosphoserine; by PKA. The short motif at 302–313 (SAIVAAINALST) is the Nuclear export signal element. The region spanning 400–582 (PSLPALDWQL…NPIECSQRSA (183 aa)) is the RHD domain. A DNA-binding region spans residues 429–436 (RAHYETEG). The short motif at 672–674 (KRK) is the Nuclear localization signal element. The segment at 772-822 (GPGHLGLQRPAGGVLGGQEAPRPGGPHPGAPQLHPLNLSQSIVTRLTEPQP) is disordered. The span at 808–822 (NLSQSIVTRLTEPQP) shows a compositional bias: polar residues.

As to quaternary structure, member of the multicomponent NFATC transcription complex that consists of at least two components, a pre-existing cytoplasmic component NFATC2 and an inducible nuclear component NFATC1. Other members such as NFATC4, NFATC3 or members of the activating protein-1 family, MAF, GATA4 and Cbp/p300 can also bind the complex. NFATC proteins bind to DNA as monomers. Interacts with HOMER2 and HOMER3; this interaction may compete with calcineurin/PPP3CA-binding and hence prevent NFATC1 dephosphorylation and activation. Interacts with TLE6/GRG6. Phosphorylated by NFATC-kinase and GSK3B; phosphorylation induces NFATC1 nuclear exit and dephosphorylation by calcineurin promotes nuclear import. Phosphorylation by PKA and DYRK2 negatively modulates nuclear accumulation, and promotes subsequent phosphorylation by GSK3B or casein kinase 1.

The protein resides in the cytoplasm. It localises to the nucleus. Functionally, plays a role in the inducible expression of cytokine genes in T-cells, especially in the induction of the IL-2 or IL-4 gene transcription. Also controls gene expression in embryonic cardiac cells. Could regulate not only the activation and proliferation but also the differentiation and programmed death of T-lymphocytes as well as lymphoid and non-lymphoid cells. Required for osteoclastogenesis and regulates many genes important for osteoclast differentiation and function. This chain is Nuclear factor of activated T-cells, cytoplasmic 1 (NFATC1), found in Sus scrofa (Pig).